The chain runs to 493 residues: Dihydro-heme d1 dehydrogenase (493 aa).

Residues 1–18 (MRLIGLALGLLLGALAQA) form the signal peptide. The Cytochrome c domain occupies 19–96 (GEAPGEALYR…ALVAYLYQAP (78 aa)). 5 residues coordinate heme c: Cys31, Cys34, His35, Arg68, and Met73. Residues 114–468 (PHPLATLPSR…YDAHSLEEVK (355 aa)) are D1-heme domain. Positions 165, 167, 169, 182, 207, 208, 341, 390, and 435 each coordinate heme d1. Arg182 is a binding site for heme c.

It belongs to the cytochrome c family. Monomer. The cofactor is heme c.

Its subcellular location is the periplasm. It carries out the reaction dihydro-heme d1 + A = heme d1 + AH2. It functions in the pathway porphyrin-containing compound metabolism. Functionally, involved in heme d1 biosynthesis. Catalyzes the introduction of a double bond into the propionate side chain of pyrrole ring D of dihydro-heme d1, therefore converting dihydro-heme d1 to heme d1. This is Dihydro-heme d1 dehydrogenase from Pseudomonas aeruginosa (strain ATCC 15692 / DSM 22644 / CIP 104116 / JCM 14847 / LMG 12228 / 1C / PRS 101 / PAO1).